The primary structure comprises 81 residues: UPF0181 protein Spro_2806 (81 aa).

Residues 43-81 (EKHQGDQVSVMFDDEDDDEEYQERPDDQADDDSEEDENY) form a disordered region. 2 stretches are compositionally biased toward acidic residues: residues 54 to 63 (FDDEDDDEEY) and 70 to 81 (QADDDSEEDENY).

This sequence belongs to the UPF0181 family.

The protein is UPF0181 protein Spro_2806 of Serratia proteamaculans (strain 568).